The primary structure comprises 1357 residues: DNA-directed RNA polymerase subunit beta (1357 aa).

It belongs to the RNA polymerase beta chain family. The RNAP catalytic core consists of 2 alpha, 1 beta, 1 beta' and 1 omega subunit. When a sigma factor is associated with the core the holoenzyme is formed, which can initiate transcription.

The catalysed reaction is RNA(n) + a ribonucleoside 5'-triphosphate = RNA(n+1) + diphosphate. Its function is as follows. DNA-dependent RNA polymerase catalyzes the transcription of DNA into RNA using the four ribonucleoside triphosphates as substrates. This is DNA-directed RNA polymerase subunit beta from Pseudomonas entomophila (strain L48).